The sequence spans 206 residues: ATP-dependent Clp protease proteolytic subunit (206 aa).

Catalysis depends on serine 101, which acts as the Nucleophile. Histidine 126 is an active-site residue.

The protein belongs to the peptidase S14 family. Component of the chloroplastic Clp protease core complex.

The protein localises to the plastid. Its subcellular location is the chloroplast stroma. The enzyme catalyses Hydrolysis of proteins to small peptides in the presence of ATP and magnesium. alpha-casein is the usual test substrate. In the absence of ATP, only oligopeptides shorter than five residues are hydrolyzed (such as succinyl-Leu-Tyr-|-NHMec, and Leu-Tyr-Leu-|-Tyr-Trp, in which cleavage of the -Tyr-|-Leu- and -Tyr-|-Trp bonds also occurs).. Its function is as follows. Cleaves peptides in various proteins in a process that requires ATP hydrolysis. Has a chymotrypsin-like activity. Plays a major role in the degradation of misfolded proteins. This is ATP-dependent Clp protease proteolytic subunit from Solanum lycopersicum (Tomato).